A 157-amino-acid polypeptide reads, in one-letter code: Transcription elongation factor GreA (157 aa).

The disordered stretch occupies residues 1–60 (MEKVPMTSAGFAALGEELKKRQSEDRPRIIEHIAEARSHGDLSENAEYHAAKEEQSHNEG). Residues 16–60 (EELKKRQSEDRPRIIEHIAEARSHGDLSENAEYHAAKEEQSHNEG) are compositionally biased toward basic and acidic residues. Positions 46–73 (AEYHAAKEEQSHNEGRIAELEDKLARAD) form a coiled coil.

Belongs to the GreA/GreB family.

Necessary for efficient RNA polymerase transcription elongation past template-encoded arresting sites. The arresting sites in DNA have the property of trapping a certain fraction of elongating RNA polymerases that pass through, resulting in locked ternary complexes. Cleavage of the nascent transcript by cleavage factors such as GreA or GreB allows the resumption of elongation from the new 3'terminus. GreA releases sequences of 2 to 3 nucleotides. In Bradyrhizobium diazoefficiens (strain JCM 10833 / BCRC 13528 / IAM 13628 / NBRC 14792 / USDA 110), this protein is Transcription elongation factor GreA.